A 475-amino-acid chain; its full sequence is 7-dehydrocholesterol reductase (475 aa).

Positions 1-21 (MAAKSQPNIPKAKSLDGVTND) are disordered. At Ser14 the chain carries Phosphoserine. The next 6 helical transmembrane spans lie at 40-60 (LASVIFLLLFAPFIVYYFIMA), 154-174 (THLLWFANAHLLSWFSPTIIF), 177-197 (WIPLLWCANILGYAVSTFAMV), 266-286 (VTNAMVLVNVLQAIYVIDFFW), 306-326 (LGWGDCVWLPYLYTLQGLYLV), and 331-351 (QLSTPHAVGVLLLGLVGYYIF). NADP(+) is bound by residues Lys358, Arg362, Leu395, Trp400, and 407–408 (NY). A helical transmembrane segment spans residues 420–440 (LACGGGHLLPYFYIIYMAILL). Residues Asp447, 451–455 (CASKY), and Tyr462 contribute to the NADP(+) site.

The protein belongs to the ERG4/ERG24 family. As to quaternary structure, interacts with DHCR24; this interaction regulates DHCR7 activity. Interacts with TMEM147. As to expression, widely expressed. Most abundant in adrenal gland, liver, testis, and brain.

The protein resides in the endoplasmic reticulum membrane. It catalyses the reaction cholesterol + NADP(+) = 7-dehydrocholesterol + NADPH + H(+). It carries out the reaction 7-dehydrodesmosterol + NADPH + H(+) = desmosterol + NADP(+). The enzyme catalyses 5,6alpha-epoxy-5alpha-cholestan-3beta-ol + H2O = 5alpha-cholestane-3beta,5,6beta-triol. The catalysed reaction is 5,6beta-epoxy-5beta-cholestan-3beta-ol + H2O = 5alpha-cholestane-3beta,5,6beta-triol. It participates in steroid biosynthesis; cholesterol biosynthesis. Its activity is regulated as follows. 7-DHC reductase and cholesterol-5,6-epoxide hydrolase (ChEH) activities are inhibited by tamoxifen and the selective AEBS ligand (4-benzyl-phenoxy)-ethyl-N-pyrrolidine (PBPE). ChEH activity is inhibited by oleic acid. Functionally, oxidoreductase that catalyzes the last step of the cholesterol synthesis pathway, which transforms cholesta-5,7-dien-3beta-ol (7-dehydrocholesterol,7-DHC) into cholesterol by reducing the C7-C8 double bond of its sterol core. Can also metabolize cholesta-5,7,24-trien-3beta-ol (7-dehydrodemosterol, 7-DHD) to desmosterol, which is then metabolized by the Delta(24)-sterol reductase (DHCR24) to cholesterol. Modulates ferroptosis (a form of regulated cell death driven by iron-dependent lipid peroxidation) through the metabolic breakdown of the anti-ferroptotic metabolites 7-DHC and 7-DHD which, when accumulated, divert the propagation of peroxyl radical-mediated damage from phospholipid components to its sterol core, protecting plasma and mitochondrial membranes from phospholipid autoxidation. Its function is as follows. Component of the microsomal antiestrogen binding site (AEBS), a multiproteic complex at the ER membrane that consists of an association between cholestenol Delta-isomerase/EBP and DHCR7. This complex is responsible for cholesterol-5,6-epoxide hydrolase (ChEH) activity, which consists in the hydration of cholesterol-5,6-epoxides (5,6-EC) into cholestane-3beta,5alpha,6beta-triol (CT). The precise role of each component of this complex has not been described yet. The sequence is that of 7-dehydrocholesterol reductase from Homo sapiens (Human).